A 200-amino-acid chain; its full sequence is Small ribosomal subunit protein uS4 (200 aa).

In terms of domain architecture, S4 RNA-binding spans 92–155; the sequence is SRLDNLVYRM…RNLTVVKEAL (64 aa).

The protein belongs to the universal ribosomal protein uS4 family. Part of the 30S ribosomal subunit. Contacts protein S5. The interaction surface between S4 and S5 is involved in control of translational fidelity.

One of the primary rRNA binding proteins, it binds directly to 16S rRNA where it nucleates assembly of the body of the 30S subunit. Functionally, with S5 and S12 plays an important role in translational accuracy. The sequence is that of Small ribosomal subunit protein uS4 from Shouchella clausii (strain KSM-K16) (Alkalihalobacillus clausii).